Here is a 2026-residue protein sequence, read N- to C-terminus: E3 ubiquitin-protein ligase TRIP12 (2026 aa).

Polar residues-rich tracts occupy residues 1-10, 32-42, and 73-84; these read MSNRPNSNPG, GRNSLSLSVGS, and SSVSEPNITFSP. The segment at 1–437 is disordered; it reads MSNRPNSNPG…SGESESDDSE (437 aa). Composition is skewed to low complexity over residues 94 to 112, 135 to 161, 171 to 188, and 199 to 241; these read SSHFSDSSASGPSAPAISP, AEPAPARALSKKSSSYPGPSGASSTPS, LLSSSSSSSLPSSSSAAG, and AAKP…SSAA. The span at 359–371 shows a compositional bias: polar residues; that stretch reads QKTTGSCASTSRR. Over residues 379–391 the composition is skewed to basic and acidic residues; sequence GAAEARRQEKMAD. Positions 392 to 404 are enriched in polar residues; sequence SDNNQDGANSSAA. The segment covering 412-430 has biased composition (low complexity); that stretch reads GASASSSVAGAVGMTTSGE. The WWE domain maps to 789–876; the sequence is MLKKGSAQTT…DPELAKCFIK (88 aa). Disordered regions lie at residues 1008–1123 and 1441–1470; these read SNVT…SVSN and GCKDAVGGKRGRAQTAPTKTSPRNAKKQDE. The segment covering 1040–1053 has biased composition (basic residues); it reads KRKRLPKRGPRRPK. Positions 1056 to 1065 are enriched in basic and acidic residues; the sequence is PPRDDDKVDN. The segment covering 1068–1079 has biased composition (low complexity); that stretch reads KSPTTTQSPKSS. Over residues 1094 to 1104 the composition is skewed to polar residues; sequence TQANSANSEPS. The tract at residues 1530-1604 is K-box; that stretch reads EIIPTGEFIN…AMQRLLDTNP (75 aa). The region spanning 1919-2026 is the HECT domain; that stretch reads PDHGYTHDSR…REGQQSFHLS (108 aa). The active-site Glycyl thioester intermediate is Cys-1993.

It belongs to the UPL family. K-HECT subfamily.

It localises to the nucleus. The protein resides in the nucleoplasm. The enzyme catalyses S-ubiquitinyl-[E2 ubiquitin-conjugating enzyme]-L-cysteine + [acceptor protein]-L-lysine = [E2 ubiquitin-conjugating enzyme]-L-cysteine + N(6)-ubiquitinyl-[acceptor protein]-L-lysine.. It functions in the pathway protein modification; protein ubiquitination. E3 ubiquitin-protein ligase involved in ubiquitin fusion degradation (UFD) pathway and regulation of DNA repair. Part of the ubiquitin fusion degradation (UFD) pathway, a process that mediates ubiquitination of protein at their N-terminus, regardless of the presence of lysine residues in target proteins. Acts as a key regulator of DNA damage response by acting as a suppressor of RNF168, an E3 ubiquitin-protein ligase that promotes accumulation of 'Lys-63'-linked histone H2A and H2AX at DNA damage sites, thereby acting as a guard against excessive spreading of ubiquitinated chromatin at damaged chromosomes. This chain is E3 ubiquitin-protein ligase TRIP12 (trip12), found in Danio rerio (Zebrafish).